We begin with the raw amino-acid sequence, 190 residues long: Cytidylate kinase (190 aa).

7 to 15 (GKIGSGKST) provides a ligand contact to ATP.

The protein belongs to the cytidylate kinase family. Type 2 subfamily.

It localises to the cytoplasm. The enzyme catalyses CMP + ATP = CDP + ADP. The catalysed reaction is dCMP + ATP = dCDP + ADP. In Thermoplasma volcanium (strain ATCC 51530 / DSM 4299 / JCM 9571 / NBRC 15438 / GSS1), this protein is Cytidylate kinase.